The following is a 637-amino-acid chain: Acetolactate synthase 2, chloroplastic (637 aa).

The transit peptide at 1–73 directs the protein to the chloroplast; the sequence is MASFSFFGTI…SSKYAPNVPR (73 aa). Residues 35–69 are disordered; it reads RRATRVSVSANSKKDQDRTASRRENPSTFSSKYAP. The span at 46 to 59 shows a compositional bias: basic and acidic residues; it reads SKKDQDRTASRREN. Glu-120 provides a ligand contact to thiamine diphosphate. FAD contacts are provided by residues Arg-222, 329–350, and 372–391; these read HGTVYANYAVEYSDLLLAFGVR and DIDSTEIGKNKTPHVSVCCD. The interval 462-542 is thiamine pyrophosphate binding; that stretch reads QHQMWAAQFY…VKVLLINNQH (81 aa). Mg(2+)-binding residues include Asp-513 and Asn-540.

This sequence belongs to the TPP enzyme family. The cofactor is Mg(2+). Requires thiamine diphosphate as cofactor.

It is found in the plastid. It localises to the chloroplast. It catalyses the reaction 2 pyruvate + H(+) = (2S)-2-acetolactate + CO2. The protein operates within amino-acid biosynthesis; L-isoleucine biosynthesis; L-isoleucine from 2-oxobutanoate: step 1/4. It participates in amino-acid biosynthesis; L-valine biosynthesis; L-valine from pyruvate: step 1/4. The sequence is that of Acetolactate synthase 2, chloroplastic from Brassica napus (Rape).